The primary structure comprises 62 residues: Snaclec aspercetin subunit alpha (62 aa).

The cysteines at positions 2 and 13 are disulfide-linked. The region spanning 9-62 is the C-type lectin domain; sequence YEGHCYRFFHPPKDWADAERFCTEQAKGGALVSIQRFGEEDFVSNLITKNLQRG.

Belongs to the snaclec family. In terms of assembly, heterodimer; disulfide-linked. Expressed by the venom gland.

Its subcellular location is the secreted. Its function is as follows. Snaclec that binds to von Willebrand factor (VWF) and induces its interaction with GPIbalpha (GP1BA) (via the vWF A1 domain), resulting in platelet aggregation. Intravenous injection in mice induces a dose-dependent drop in platelet count (thrombocytopenia). Pretreatment by intravenous injection by this protein in mice potentiates the hemorrhagic lesion in the skin provoked by the metalloproteinase BaP1 intradermally injected. This result is not observed when both BaP1 and this protein are injected simultaneously. This Bothrops asper (Terciopelo) protein is Snaclec aspercetin subunit alpha.